Consider the following 164-residue polypeptide: MGNKAERHRAIQEIVRREEIGTQKELVERLRQLGFEVTQATVSRDIAELGLARIALGKGRHRYVLPAADLPENAYEELKRQFGLFVRDVDRGGNLLVVKTAEGHASGIAYLLDRLRRDEIVGTLAGDDTILVVARTEEAAQALEDEFAGLLVEGRALRRALSGS.

It belongs to the ArgR family.

The protein resides in the cytoplasm. It participates in amino-acid biosynthesis; L-arginine biosynthesis [regulation]. Regulates arginine biosynthesis genes. The chain is Arginine repressor from Thermus thermophilus (strain ATCC BAA-163 / DSM 7039 / HB27).